Here is a 645-residue protein sequence, read N- to C-terminus: MTDLPPHSSHHPADQGEPLVPAEKKQGVEAIREALKTIPYSPGVYRMLSEKGEVLYVGKALSLKKRVSSYIRINQLPERLRRMVSMTVSMEIVITRTEADALLLEANYIKRMKPRFNILLRDDKSYPWLMLTESHEFPQITKQRGKPVKGATYWGPFANAWAVNQTLNLVQRSFLLRSCSDAVLNSRTRPCLLYQIKRCSAPCVDRISKEDYAELVSEARQFLSGHSTELQQRLVAEMEQASQELNYERAASIRDRIRGFASIQGSSTINPTSINDADIMTIWQEAGQSCIQVFFIRGSRNNGNRAFYPAHAEEETAADVLSAFMIQFYDNKPPPPSILVNCELPEPKLVEEALSIRRGQKVEILRPQRGEKKDVVEHAALNAREALERKLAENTGQRRLLEGVAEVFGLPEIPQRIETYDNSHIMGQAPYGVMVVGGPEGFNKRAYRKYAIKGPVTPGDDFGMMREVMERRFGHRSENGERPEDWPDLLLIDGGLGQFNAVRAVLADLGVTGIPIVAIAKGPDRDAGREWFFTETKSPFQLPPRDPVLYYLQRLRDEAHRFAITTHRAGRSKGLRSSELDHVPGIGAARKKALLNHFGSAKSVRQASLEELENAPGISSSTATAIYGHFHPEWVQKTSADNRSH.

Residues 1-20 (MTDLPPHSSHHPADQGEPLV) are disordered. A GIY-YIG domain is found at 40 to 118 (YSPGVYRMLS…IKRMKPRFNI (79 aa)). The region spanning 228–263 (TELQQRLVAEMEQASQELNYERAASIRDRIRGFASI) is the UVR domain.

Belongs to the UvrC family. As to quaternary structure, interacts with UvrB in an incision complex.

It localises to the cytoplasm. Functionally, the UvrABC repair system catalyzes the recognition and processing of DNA lesions. UvrC both incises the 5' and 3' sides of the lesion. The N-terminal half is responsible for the 3' incision and the C-terminal half is responsible for the 5' incision. The protein is UvrABC system protein C of Gluconobacter oxydans (strain 621H) (Gluconobacter suboxydans).